The primary structure comprises 137 residues: Large ribosomal subunit protein uL16 (137 aa).

Belongs to the universal ribosomal protein uL16 family. Part of the 50S ribosomal subunit.

Binds 23S rRNA and is also seen to make contacts with the A and possibly P site tRNAs. The chain is Large ribosomal subunit protein uL16 from Pseudomonas putida (strain ATCC 47054 / DSM 6125 / CFBP 8728 / NCIMB 11950 / KT2440).